The sequence spans 325 residues: Olfactory receptor 10AC1 (325 aa).

Residues M1–P26 are Extracellular-facing. N-linked (GlcNAc...) asparagine glycosylation occurs at N6. A helical membrane pass occupies residues V27 to L47. The Cytoplasmic portion of the chain corresponds to V48–Q57. Residues P58 to V78 form a helical membrane-spanning segment. Over P79–C101 the chain is Extracellular. The helical transmembrane segment at A102–M122 threads the bilayer. Residues A123–R147 are Cytoplasmic-facing. A helical transmembrane segment spans residues L148–F168. The Extracellular segment spans residues H169–P171. The helical transmembrane segment at F172–A192 threads the bilayer. At C193 to E200 the chain is on the cytoplasmic side. The helical transmembrane segment at L201–S221 threads the bilayer. The Extracellular portion of the chain corresponds to Y222 to S243. Residues T244–V264 form a helical membrane-spanning segment. The Cytoplasmic segment spans residues R265–L325.

This sequence belongs to the G-protein coupled receptor 1 family.

The protein resides in the cell membrane. Functionally, odorant receptor. The protein is Olfactory receptor 10AC1 (OR10AC1) of Homo sapiens (Human).